The sequence spans 501 residues: Carboxypeptidase 1 (501 aa).

The Peptidase M32 domain occupies 3-496 (IHTYEKEFFD…LIDYLSNKYS (494 aa)). The short motif at 234 to 236 (HPF) is the HPF element. Positions 244-248 (DVRVT) match the DXRXT motif. His-265 serves as a coordination point for Zn(2+). The HEXXH signature appears at 265–269 (HECGH). Glu-266 acts as the Proton donor/acceptor in catalysis. 2 residues coordinate Zn(2+): His-269 and Glu-295. The HES/GQ motif lies at 294–297 (HESQ). The I/NRXXA/SD signature appears at 347–352 (IRVEAD). The GXXQDXHW signature appears at 402–409 (GILQDVHW).

It belongs to the peptidase M32 family. As to quaternary structure, homodimer. It depends on Zn(2+) as a cofactor.

It catalyses the reaction Release of a C-terminal amino acid with broad specificity, except for -Pro.. Functionally, broad specificity carboxypetidase that releases amino acids sequentially from the C-terminus, including neutral, aromatic, polar and basic residues. Has lower activity with substrates ending with His or Trp. The sequence is that of Carboxypeptidase 1 (ypwA) from Bacillus subtilis (strain 168).